Reading from the N-terminus, the 27-residue chain is Morintide mO5 (27 aa).

The 27-residue stretch at 1-27 (NGLCCSQYGFCGTTSQYCSRANGCQSN) folds into the Chitin-binding type-1 domain. A disulfide bond links Cys-4 and Cys-18.

In terms of tissue distribution, seeds (at protein level).

Its function is as follows. Chitin-binding protein which functions in defense against chitin-containing fungal pathogens. This chain is Morintide mO5, found in Moringa oleifera (Horseradish tree).